Consider the following 338-residue polypeptide: O-methyltransferase 4 (338 aa).

Residues Gly-184, Asp-207, Asn-230, Phe-231, Lys-244, and Arg-245 each contribute to the S-adenosyl-L-methionine site. The active-site Proton acceptor is His-248.

This sequence belongs to the class I-like SAM-binding methyltransferase superfamily. Cation-independent O-methyltransferase family. COMT subfamily.

The enzyme catalyses (3,5-dichloro-2,4,6-trihydroxyphenyl)hexan-1-one + S-adenosyl-L-methionine = 1-(3,5-dichloro-2,6-dihydroxy-4-methoxyphenyl)hexan-1-one + S-adenosyl-L-homocysteine + H(+). This chain is O-methyltransferase 4 (omt4), found in Dictyostelium discoideum (Social amoeba).